We begin with the raw amino-acid sequence, 1161 residues long: Mitogen-activated protein kinase kinase kinase (1161 aa).

The region spanning 56-120 (GDGSLWTALY…PKDFVTDEDP (65 aa)) is the SH3 domain. The Protein kinase domain occupies 142 to 402 (LDIKEVIGSG…KEILKQLESI (261 aa)). ATP contacts are provided by residues 148–156 (IGSGGFCKV) and Lys-169. Asp-264 serves as the catalytic Proton acceptor. Thr-300 is subject to Phosphothreonine; by autocatalysis. Ser-304 carries the post-translational modification Phosphoserine; by autocatalysis. 2 leucine-zipper regions span residues 426–447 (IAGVLHDLREKEKELRNKEEQL) and 461–482 (LKIREQNLRERERVLIERELVM). A phosphoserine mark is found at Ser-525 and Ser-560. Disordered regions lie at residues 560–615 (SQLS…GSGG) and 658–678 (TTNNNNNNNNSISANNNNQLN). Over residues 571 to 583 (AQTSTHSSFSKSA) the composition is skewed to polar residues. Positions 591–601 (QQQNQQQVASL) are enriched in low complexity. A phosphoserine mark is found at Ser-685, Ser-773, and Ser-792. The interval 790-830 (GNSPAVGRKKHSLDSSSHHPPANGSNSFALPNQLTLPSEDN) is disordered. Residues 812-830 (NGSNSFALPNQLTLPSEDN) are compositionally biased toward polar residues. A Phosphothreonine modification is found at Thr-862. Disordered stretches follow at residues 988-1014 (RSASPSLSSSSTTASASPSIASTEAVN), 1045-1093 (EQRQ…SAGS), and 1137-1161 (GGSSRSLKRKGKKPQTQSCEQLERC). Positions 989–1010 (SASPSLSSSSTTASASPSIAST) are enriched in low complexity. At Ser-993 the chain carries Phosphoserine. Residues 1052–1063 (NQKKQRPKHITK) show a composition bias toward basic residues. Basic and acidic residues predominate over residues 1073 to 1086 (GQHHEHDDHNDPQH). Positions 1150–1161 (PQTQSCEQLERC) are enriched in polar residues.

The protein belongs to the protein kinase superfamily. STE Ser/Thr protein kinase family. MAP kinase kinase kinase subfamily. In terms of assembly, homodimer. Mg(2+) serves as cofactor. Post-translationally, autophosphorylation on serine and threonine residues within the activation loop plays a role in enzyme activation. As to expression, expressed both maternally and zygotically. Expressed uniformly in large quantities in the early embryo (stages 1-4). In the late embryo, expression is ubiquitous, but expression levels are dramatically reduced. Expressed in the adult head and thorax, and in S2 cells.

It carries out the reaction L-seryl-[protein] + ATP = O-phospho-L-seryl-[protein] + ADP + H(+). It catalyses the reaction L-threonyl-[protein] + ATP = O-phospho-L-threonyl-[protein] + ADP + H(+). With respect to regulation, homodimerization via the leucine zipper domains is required for autophosphorylation and subsequent activation. Activated by C6-ceramide. Activates the JUN N-terminal pathway during dorsal closure. This Drosophila melanogaster (Fruit fly) protein is Mitogen-activated protein kinase kinase kinase.